Reading from the N-terminus, the 317-residue chain is Peptidyl-prolyl cis-trans isomerase CYP26-2, chloroplastic (317 aa).

Positions 1–37 are disordered; it reads MMQPNAKLLSPSAKFLPSPIEPPQHNRRTTVGAPPSL. The PPIase cyclophilin-type domain maps to 95–311; the sequence is FIDVSIDGEP…SKVVVTNCGL (217 aa).

It belongs to the cyclophilin-type PPIase family. Ubiquitous. Lower levels of expression in roots.

It is found in the plastid. The protein resides in the chloroplast thylakoid. The catalysed reaction is [protein]-peptidylproline (omega=180) = [protein]-peptidylproline (omega=0). Its function is as follows. PPIases accelerate the folding of proteins. It catalyzes the cis-trans isomerization of proline imidic peptide bonds in oligopeptides. This Arabidopsis thaliana (Mouse-ear cress) protein is Peptidyl-prolyl cis-trans isomerase CYP26-2, chloroplastic (CYP26-2).